Reading from the N-terminus, the 106-residue chain is Small ribosomal subunit protein uS10 (106 aa).

It belongs to the universal ribosomal protein uS10 family. In terms of assembly, part of the 30S ribosomal subunit.

Functionally, involved in the binding of tRNA to the ribosomes. This Wolbachia sp. subsp. Drosophila simulans (strain wRi) protein is Small ribosomal subunit protein uS10.